A 167-amino-acid polypeptide reads, in one-letter code: Brain ribonuclease (167 aa).

The N-terminal stretch at 1 to 26 is a signal peptide; the sequence is MALKSLVLLSLLVLVLLLVQVQPSLG. Residues Lys-33 and Arg-36 each contribute to the substrate site. Residue His-38 is the Proton acceptor of the active site. 4 disulfide bridges follow: Cys-52–Cys-110, Cys-66–Cys-121, Cys-84–Cys-136, and Cys-91–Cys-98. 67-71 lines the substrate pocket; it reads KPVNT. N-linked (GlcNAc...) asparagine glycosylation is present at Asn-88. Lys-92 and Arg-111 together coordinate substrate. The active-site Proton donor is His-145. An O-linked (GalNAc...) threonine glycan is attached at Thr-155. Ser-159 carries O-linked (GalNAc...) serine glycosylation.

Belongs to the pancreatic ribonuclease family.

The protein localises to the secreted. In Bos taurus (Bovine), this protein is Brain ribonuclease (BRN).